A 166-amino-acid chain; its full sequence is 2-C-methyl-D-erythritol 2,4-cyclodiphosphate synthase (166 aa).

A divalent metal cation-binding residues include Asp-12 and His-14. 4-CDP-2-C-methyl-D-erythritol 2-phosphate contacts are provided by residues 12-14 (DSH) and 38-39 (HS). A divalent metal cation is bound at residue His-46. Residues 60–62 (DIG), 65–69 (FPDTD), and Arg-146 contribute to the 4-CDP-2-C-methyl-D-erythritol 2-phosphate site.

Belongs to the IspF family. As to quaternary structure, homotrimer. A divalent metal cation is required as a cofactor.

The enzyme catalyses 4-CDP-2-C-methyl-D-erythritol 2-phosphate = 2-C-methyl-D-erythritol 2,4-cyclic diphosphate + CMP. Its pathway is isoprenoid biosynthesis; isopentenyl diphosphate biosynthesis via DXP pathway; isopentenyl diphosphate from 1-deoxy-D-xylulose 5-phosphate: step 4/6. Involved in the biosynthesis of isopentenyl diphosphate (IPP) and dimethylallyl diphosphate (DMAPP), two major building blocks of isoprenoid compounds. Catalyzes the conversion of 4-diphosphocytidyl-2-C-methyl-D-erythritol 2-phosphate (CDP-ME2P) to 2-C-methyl-D-erythritol 2,4-cyclodiphosphate (ME-CPP) with a corresponding release of cytidine 5-monophosphate (CMP). The chain is 2-C-methyl-D-erythritol 2,4-cyclodiphosphate synthase from Gemmatimonas aurantiaca (strain DSM 14586 / JCM 11422 / NBRC 100505 / T-27).